Reading from the N-terminus, the 143-residue chain is Large ribosomal subunit protein uL15 (143 aa).

2 stretches are compositionally biased toward basic residues: residues 1 to 13 and 23 to 38; these read MIRKSKKITKMRG and KKHRGAGHRGGRGNAG. The interval 1–38 is disordered; the sequence is MIRKSKKITKMRGSRTCGYGEAKKHRGAGHRGGRGNAG.

It belongs to the universal ribosomal protein uL15 family. Part of the 50S ribosomal subunit.

Functionally, binds to the 23S rRNA. This is Large ribosomal subunit protein uL15 from Methanococcus maripaludis (strain C5 / ATCC BAA-1333).